Consider the following 348-residue polypeptide: Phenylalanine--tRNA ligase alpha subunit (348 aa).

Glu-259 is a Mg(2+) binding site.

This sequence belongs to the class-II aminoacyl-tRNA synthetase family. Phe-tRNA synthetase alpha subunit type 1 subfamily. Tetramer of two alpha and two beta subunits. Mg(2+) is required as a cofactor.

The protein resides in the cytoplasm. It catalyses the reaction tRNA(Phe) + L-phenylalanine + ATP = L-phenylalanyl-tRNA(Phe) + AMP + diphosphate + H(+). In Limosilactobacillus reuteri (strain DSM 20016) (Lactobacillus reuteri), this protein is Phenylalanine--tRNA ligase alpha subunit.